Reading from the N-terminus, the 1385-residue chain is DNA-directed RNA polymerase subunit beta' (1385 aa).

The Zn(2+) site is built by C72, C74, C87, and C90. Mg(2+) is bound by residues D467, D469, and D471. Zn(2+)-binding residues include C829, C910, C917, and C920.

This sequence belongs to the RNA polymerase beta' chain family. As to quaternary structure, the RNAP catalytic core consists of 2 alpha, 1 beta, 1 beta' and 1 omega subunit. When a sigma factor is associated with the core the holoenzyme is formed, which can initiate transcription. The cofactor is Mg(2+). It depends on Zn(2+) as a cofactor.

The enzyme catalyses RNA(n) + a ribonucleoside 5'-triphosphate = RNA(n+1) + diphosphate. Its function is as follows. DNA-dependent RNA polymerase catalyzes the transcription of DNA into RNA using the four ribonucleoside triphosphates as substrates. The protein is DNA-directed RNA polymerase subunit beta' of Elusimicrobium minutum (strain Pei191).